Here is a 307-residue protein sequence, read N- to C-terminus: Tyrosine recombinase XerC (307 aa).

One can recognise a Core-binding (CB) domain in the interval 9-95; sequence ETLSLAIDSF…ALRSFLDWQV (87 aa). Positions 116-296 constitute a Tyr recombinase domain; it reads HLPKNMDVDE…DFQHLAKVYD (181 aa). Active-site residues include Arg-155, Lys-179, His-248, Arg-251, and His-274. Residue Tyr-283 is the O-(3'-phospho-DNA)-tyrosine intermediate of the active site.

This sequence belongs to the 'phage' integrase family. XerC subfamily. Forms a cyclic heterotetrameric complex composed of two molecules of XerC and two molecules of XerD, in which XerC interacts with XerD via its C-terminal region, XerD interacts with XerC via its C-terminal region and so on.

The protein localises to the cytoplasm. FtsK may regulate the catalytic switch between XerC and XerD in the heterotetrameric complex during the two steps of the recombination process. Its function is as follows. Site-specific tyrosine recombinase, which acts by catalyzing the cutting and rejoining of the recombining DNA molecules. Binds cooperatively to specific DNA consensus sequences that are separated from XerD binding sites by a short central region, forming the heterotetrameric XerC-XerD complex that recombines DNA substrates. The complex is essential to convert dimers of the bacterial chromosome into monomers to permit their segregation at cell division. It also contributes to the segregational stability of plasmids. In the complex XerC specifically exchanges the top DNA strands. The chain is Tyrosine recombinase XerC from Proteus mirabilis.